The chain runs to 50 residues: Protein PndA (50 aa).

Residues 5–25 (TFLMMLIVVCVTILCFVWMVR) traverse the membrane as a helical segment.

Belongs to the Hok/Gef family.

It is found in the cell inner membrane. Functionally, when overexpressed kill the cells from the inside by interfering with a vital function in the cell membrane. In terms of biological role, toxic component of a type I toxin-antitoxin (TA) system. When expressed is involved in cellular Mg(2+) release and degradation of stable RNA. The chain is Protein PndA (pndA) from Escherichia coli.